The sequence spans 129 residues: Phosphoribosyl-AMP cyclohydrolase (129 aa).

D87 is a binding site for Mg(2+). C88 contributes to the Zn(2+) binding site. Mg(2+)-binding residues include D89 and D91. Zn(2+) contacts are provided by C104 and C111.

Belongs to the PRA-CH family. In terms of assembly, homodimer. Requires Mg(2+) as cofactor. Zn(2+) serves as cofactor.

The protein localises to the cytoplasm. It carries out the reaction 1-(5-phospho-beta-D-ribosyl)-5'-AMP + H2O = 1-(5-phospho-beta-D-ribosyl)-5-[(5-phospho-beta-D-ribosylamino)methylideneamino]imidazole-4-carboxamide. Its pathway is amino-acid biosynthesis; L-histidine biosynthesis; L-histidine from 5-phospho-alpha-D-ribose 1-diphosphate: step 3/9. In terms of biological role, catalyzes the hydrolysis of the adenine ring of phosphoribosyl-AMP. In Ruegeria sp. (strain TM1040) (Silicibacter sp.), this protein is Phosphoribosyl-AMP cyclohydrolase.